Here is a 1003-residue protein sequence, read N- to C-terminus: Retinoblastoma-related protein 1 (1003 aa).

The tract at residues 405–607 (TPVSTAMTTA…EKGSSMYNSL (203 aa)) is domain A. The segment at 405 to 860 (TPVSTAMTTA…NEMFIPSVKP (456 aa)) is pocket. A spacer region spans residues 608–729 (AVAKPSLAAE…PGGGGETCAE (122 aa)). The interval 730–860 (TAINVFFGKI…NEMFIPSVKP (131 aa)) is domain B. The disordered stretch occupies residues 868–899 (AGNNSEKNDHNDGQGPASPKPSPFPKLPDMSP).

Belongs to the retinoblastoma protein (RB) family. In terms of tissue distribution, expressed in roots, stems, leaves and flowers.

Its subcellular location is the nucleus. In terms of biological role, regulator of biological processes that recruits a histone deacetylase to control gene transcription. Formation of stable complexes with geminiviridae replication-associated proteins may create a cellular environment which favors viral DNA replication. May play a role in the entry into mitosis, negatively regulating the cell proliferation during leaf, stem, and flower development. Critical regulator of the endocycle. In Nicotiana benthamiana, this protein is Retinoblastoma-related protein 1 (RBR1).